Here is a 575-residue protein sequence, read N- to C-terminus: Acetolactate synthase large subunit (575 aa).

Glutamate 57 contacts thiamine diphosphate. FAD contacts are provided by residues arginine 159, 265–286 (HGSY…LGSR), and 308–327 (DIDA…ILSD). The thiamine pyrophosphate binding stretch occupies residues 395-475 (QHQMWVAQYY…IKVVLINNHS (81 aa)). The Mg(2+) site is built by aspartate 446 and asparagine 473.

The protein belongs to the TPP enzyme family. Dimer of large and small chains. The cofactor is Mg(2+). It depends on thiamine diphosphate as a cofactor.

The catalysed reaction is 2 pyruvate + H(+) = (2S)-2-acetolactate + CO2. Its pathway is amino-acid biosynthesis; L-isoleucine biosynthesis; L-isoleucine from 2-oxobutanoate: step 1/4. It functions in the pathway amino-acid biosynthesis; L-valine biosynthesis; L-valine from pyruvate: step 1/4. This is Acetolactate synthase large subunit (ilvB) from Lactococcus lactis subsp. lactis (strain IL1403) (Streptococcus lactis).